The sequence spans 1146 residues: Nitrogen permease regulator 3 (1146 aa).

An N-terminal signal peptide occupies residues 1–25 (MDECLPNSCLLGVHLVISTHSGPQI). Ser76 bears the Phosphoserine mark. Disordered regions lie at residues 90 to 159 (AITP…LSDS), 177 to 221 (SSLS…SPQM), 237 to 340 (SGTN…HHYH), and 440 to 466 (GRWRKSKHKNKTRSKRSSSTTTNISRK). The segment covering 105–123 (LPPTRSHANTVGSQSSIPA) has biased composition (polar residues). 2 stretches are compositionally biased toward low complexity: residues 150–159 (ETSSSGLSDS) and 177–196 (SSLSSSSLSSSPSSSSSSSP). Polar residues-rich tracts occupy residues 201 to 221 (LSRTNSSFQSTDSMSPTSPQM), 237 to 253 (SGTNNKSRAASKRSQNF), and 277 to 303 (KPSQSTKKGNKLLKNTSNETDGNAFTG). The segment covering 304–315 (SCSISSKKSLSS) has biased composition (low complexity). Residues 323-334 (LRNSSLNDTPGQ) show a composition bias toward polar residues. Positions 441-455 (RWRKSKHKNKTRSKR) are enriched in basic residues. 2 positions are modified to phosphoserine: Ser486 and Ser987. Positions 979-1047 (KTNTARRPSM…SRVDDRDDNE (69 aa)) are disordered. Basic and acidic residues-rich tracts occupy residues 986 to 1004 (PSMDYKKTDKKLDDEDGQS) and 1025 to 1042 (NNKDVDEKDNENDSRVDD).

Belongs to the NPR3 family. As to quaternary structure, component of the SEA complex composed of at least IML1/SEA1, RTC1/SEA2, MTC5/SEA3, NPR2, NPR3, SEA4, SEC13 and SEH1. Forms a heterodimer with NPR2.

It is found in the vacuole membrane. Functionally, component of the SEA complex which coats the vacuolar membrane and is involved in intracellular trafficking, autophagy, response to nitrogen starvation, and amino acid biogenesis. Mediates inactivation of the TORC1 complex in response to amino acid starvation. Required for meiotic nuclear division. In Saccharomyces cerevisiae (strain ATCC 204508 / S288c) (Baker's yeast), this protein is Nitrogen permease regulator 3 (NPR3).